The sequence spans 229 residues: Cytochrome c oxidase subunit 2 (229 aa).

The Mitochondrial intermembrane segment spans residues 1–26 (MANWTQLGLQDASSPLMEELIYFHDY). The chain crosses the membrane as a helical span at residues 27–48 (TLIILTLITILVFYGLASLLFS). Topologically, residues 49-62 (SNTNRFFLEGQGLE) are mitochondrial matrix. Residues 63-82 (TVWTIIPAVILIFIALPSLQ) traverse the membrane as a helical segment. Residues 83–229 (LLYLMDEVNN…ETWVSNFITE (147 aa)) are Mitochondrial intermembrane-facing. His161, Cys196, Glu198, Cys200, His204, and Met207 together coordinate Cu cation. Glu198 contacts Mg(2+).

Belongs to the cytochrome c oxidase subunit 2 family. As to quaternary structure, component of the cytochrome c oxidase (complex IV, CIV), a multisubunit enzyme composed of a catalytic core of 3 subunits and several supernumerary subunits. The complex exists as a monomer or a dimer and forms supercomplexes (SCs) in the inner mitochondrial membrane with ubiquinol-cytochrome c oxidoreductase (cytochrome b-c1 complex, complex III, CIII). It depends on Cu cation as a cofactor.

It is found in the mitochondrion inner membrane. It catalyses the reaction 4 Fe(II)-[cytochrome c] + O2 + 8 H(+)(in) = 4 Fe(III)-[cytochrome c] + 2 H2O + 4 H(+)(out). Functionally, component of the cytochrome c oxidase, the last enzyme in the mitochondrial electron transport chain which drives oxidative phosphorylation. The respiratory chain contains 3 multisubunit complexes succinate dehydrogenase (complex II, CII), ubiquinol-cytochrome c oxidoreductase (cytochrome b-c1 complex, complex III, CIII) and cytochrome c oxidase (complex IV, CIV), that cooperate to transfer electrons derived from NADH and succinate to molecular oxygen, creating an electrochemical gradient over the inner membrane that drives transmembrane transport and the ATP synthase. Cytochrome c oxidase is the component of the respiratory chain that catalyzes the reduction of oxygen to water. Electrons originating from reduced cytochrome c in the intermembrane space (IMS) are transferred via the dinuclear copper A center (CU(A)) of subunit 2 and heme A of subunit 1 to the active site in subunit 1, a binuclear center (BNC) formed by heme A3 and copper B (CU(B)). The BNC reduces molecular oxygen to 2 water molecules using 4 electrons from cytochrome c in the IMS and 4 protons from the mitochondrial matrix. The sequence is that of Cytochrome c oxidase subunit 2 (COII) from Patiria pectinifera (Starfish).